A 188-amino-acid chain; its full sequence is Elongation factor P (188 aa).

Position 34 is an N6-(3,6-diaminohexanoyl)-5-hydroxylysine (K34).

Belongs to the elongation factor P family. Post-translationally, may be beta-lysylated on the epsilon-amino group of Lys-34 by the combined action of EpmA and EpmB, and then hydroxylated on the C5 position of the same residue by EpmC (if this protein is present). Lysylation is critical for the stimulatory effect of EF-P on peptide-bond formation. The lysylation moiety may extend toward the peptidyltransferase center and stabilize the terminal 3-CCA end of the tRNA. Hydroxylation of the C5 position on Lys-34 may allow additional potential stabilizing hydrogen-bond interactions with the P-tRNA.

It localises to the cytoplasm. Its pathway is protein biosynthesis; polypeptide chain elongation. Involved in peptide bond synthesis. Alleviates ribosome stalling that occurs when 3 or more consecutive Pro residues or the sequence PPG is present in a protein, possibly by augmenting the peptidyl transferase activity of the ribosome. Modification of Lys-34 is required for alleviation. This chain is Elongation factor P, found in Haemophilus influenzae (strain PittGG).